The primary structure comprises 518 residues: Glutamate--cysteine ligase (518 aa).

It belongs to the glutamate--cysteine ligase type 1 family. Type 1 subfamily.

The catalysed reaction is L-cysteine + L-glutamate + ATP = gamma-L-glutamyl-L-cysteine + ADP + phosphate + H(+). The protein operates within sulfur metabolism; glutathione biosynthesis; glutathione from L-cysteine and L-glutamate: step 1/2. The chain is Glutamate--cysteine ligase from Escherichia coli O127:H6 (strain E2348/69 / EPEC).